Reading from the N-terminus, the 447-residue chain is tRNA-2-methylthio-N(6)-dimethylallyladenosine synthase (447 aa).

The region spanning 1–116 (MYIRTFGCQM…LPDLIKRRRA (116 aa)) is the MTTase N-terminal domain. Residues Cys8, Cys45, Cys79, Cys153, Cys157, and Cys160 each coordinate [4Fe-4S] cluster. A Radical SAM core domain is found at 139-372 (RVDGATAFVS…QALINQQAAA (234 aa)). Residues 375 to 438 (QGMIGTRQRV…TNSLRGRVAG (64 aa)) enclose the TRAM domain.

This sequence belongs to the methylthiotransferase family. MiaB subfamily. Monomer. It depends on [4Fe-4S] cluster as a cofactor.

Its subcellular location is the cytoplasm. The catalysed reaction is N(6)-dimethylallyladenosine(37) in tRNA + (sulfur carrier)-SH + AH2 + 2 S-adenosyl-L-methionine = 2-methylsulfanyl-N(6)-dimethylallyladenosine(37) in tRNA + (sulfur carrier)-H + 5'-deoxyadenosine + L-methionine + A + S-adenosyl-L-homocysteine + 2 H(+). Functionally, catalyzes the methylthiolation of N6-(dimethylallyl)adenosine (i(6)A), leading to the formation of 2-methylthio-N6-(dimethylallyl)adenosine (ms(2)i(6)A) at position 37 in tRNAs that read codons beginning with uridine. In Bordetella pertussis (strain Tohama I / ATCC BAA-589 / NCTC 13251), this protein is tRNA-2-methylthio-N(6)-dimethylallyladenosine synthase.